Reading from the N-terminus, the 217-residue chain is Non-structural protein NS3 (217 aa).

The protein belongs to the orbivirus NS3 family.

Functionally, may play a role in the release of virions from infected cells. The polypeptide is Non-structural protein NS3 (Segment-10) (Camelus dromedarius (Dromedary)).